A 591-amino-acid chain; its full sequence is L-fucose isomerase (591 aa).

Catalysis depends on proton acceptor residues Glu337 and Asp361. Mn(2+)-binding residues include Glu337, Asp361, and His528.

Belongs to the L-fucose isomerase family. Homohexamer. Mn(2+) is required as a cofactor.

It localises to the cytoplasm. It catalyses the reaction L-fucose = L-fuculose. Its pathway is carbohydrate degradation; L-fucose degradation; L-lactaldehyde and glycerone phosphate from L-fucose: step 1/3. Converts the aldose L-fucose into the corresponding ketose L-fuculose. This Salmonella schwarzengrund (strain CVM19633) protein is L-fucose isomerase.